Reading from the N-terminus, the 510-residue chain is Bifunctional pantoate ligase/cytidylate kinase (510 aa).

The tract at residues 1–276 (MNKIIIRKTE…CGKTRLIDHV (276 aa)) is pantoate--beta-alanine ligase. 29–36 (MGNLHDGH) contributes to the ATP binding site. Catalysis depends on histidine 36, which acts as the Proton donor. Glutamine 61 lines the (R)-pantoate pocket. Glutamine 61 provides a ligand contact to beta-alanine. 150 to 153 (GEKD) provides a ligand contact to ATP. Glutamine 156 provides a ligand contact to (R)-pantoate. Residue 187–190 (FSSR) participates in ATP binding. The tract at residues 277-510 (FLMKRKPIIA…LNIPKEIQLE (234 aa)) is cytidylate kinase.

In the N-terminal section; belongs to the pantothenate synthetase family. The protein in the C-terminal section; belongs to the cytidylate kinase family. Type 1 subfamily.

It localises to the cytoplasm. The catalysed reaction is (R)-pantoate + beta-alanine + ATP = (R)-pantothenate + AMP + diphosphate + H(+). It catalyses the reaction CMP + ATP = CDP + ADP. It carries out the reaction dCMP + ATP = dCDP + ADP. Its pathway is cofactor biosynthesis; (R)-pantothenate biosynthesis; (R)-pantothenate from (R)-pantoate and beta-alanine: step 1/1. Catalyzes the condensation of pantoate with beta-alanine in an ATP-dependent reaction via a pantoyl-adenylate intermediate. Its function is as follows. Catalyzes the transfer of a phosphate group from ATP to either CMP or dCMP to form CDP or dCDP and ADP, respectively. The chain is Bifunctional pantoate ligase/cytidylate kinase from Prochlorococcus marinus subsp. pastoris (strain CCMP1986 / NIES-2087 / MED4).